Reading from the N-terminus, the 489-residue chain is Cytochrome P450 71A26 (489 aa).

The helical transmembrane segment at 1–21 (MMIMFFLLCSIIFVVTIIIFR) threads the bilayer. Cys-431 is a heme binding site.

Belongs to the cytochrome P450 family. Requires heme as cofactor.

The protein resides in the membrane. The sequence is that of Cytochrome P450 71A26 (CYP71A26) from Arabidopsis thaliana (Mouse-ear cress).